An 85-amino-acid polypeptide reads, in one-letter code: MAETPSSPAPAAKAPPALKKGALVRVNRAAYEGSVEAGASDPHPPAYIFEGPGELLVVKGTYGQVRWRRPVPDVWLRMDQLEAFS.

It belongs to the complex I NdhO subunit family. NDH-1 can be composed of about 15 different subunits; different subcomplexes with different compositions have been identified which probably have different functions.

It localises to the cellular thylakoid membrane. The catalysed reaction is a plastoquinone + NADH + (n+1) H(+)(in) = a plastoquinol + NAD(+) + n H(+)(out). It carries out the reaction a plastoquinone + NADPH + (n+1) H(+)(in) = a plastoquinol + NADP(+) + n H(+)(out). NDH-1 shuttles electrons from an unknown electron donor, via FMN and iron-sulfur (Fe-S) centers, to quinones in the respiratory and/or the photosynthetic chain. The immediate electron acceptor for the enzyme in this species is believed to be plastoquinone. Couples the redox reaction to proton translocation, and thus conserves the redox energy in a proton gradient. Cyanobacterial NDH-1 also plays a role in inorganic carbon-concentration. The chain is NAD(P)H-quinone oxidoreductase subunit O from Synechococcus sp. (strain WH7803).